Here is a 59-residue protein sequence, read N- to C-terminus: MDHHLLEIIACPICNGKLHFDKKNLELICQTDELAYPISNGIPVLLESHARDLSSLEKK.

The protein belongs to the UPF0434 family.

This Hamiltonella defensa subsp. Acyrthosiphon pisum (strain 5AT) protein is UPF0434 protein HDEF_0234.